The sequence spans 310 residues: p-hydroxybenzoic acid efflux pump subunit AaeA (310 aa).

A helical transmembrane segment spans residues 12–32 (AITLVLVILAFIAIFRAWVYY).

This sequence belongs to the membrane fusion protein (MFP) (TC 8.A.1) family.

It is found in the cell inner membrane. Functionally, forms an efflux pump with AaeB. This Salmonella heidelberg (strain SL476) protein is p-hydroxybenzoic acid efflux pump subunit AaeA.